A 329-amino-acid chain; its full sequence is uncharacterized protein (329 aa).

In terms of domain architecture, Nudix hydrolase spans 27 to 185 (PRRASVAVII…IQIDSSRALK (159 aa)). 3 helical membrane passes run 123–143 (VITS…VFIL), 227–247 (PFLR…LSPS), and 303–323 (LTLL…FLII).

The protein resides in the membrane. This is an uncharacterized protein from Schizosaccharomyces pombe (strain 972 / ATCC 24843) (Fission yeast).